We begin with the raw amino-acid sequence, 294 residues long: Protein C3orf33 homolog (294 aa).

The residue at position 2 (alanine 2) is an N-acetylalanine. A helical transmembrane segment spans residues 36-53; sequence LVQNISTGMAIAGIMLLI. Residues 244-271 are disordered; that stretch reads KPAGADLGSTKDSYHDSRRRASGKGKDS.

It is found in the membrane. May play a role in transcription regulation. This is Protein C3orf33 homolog from Mus musculus (Mouse).